Consider the following 425-residue polypeptide: Enolase (425 aa).

A (2R)-2-phosphoglycerate-binding site is contributed by Gln164. Catalysis depends on Glu208, which acts as the Proton donor. Residues Asp243, Glu286, and Asp312 each coordinate Mg(2+). (2R)-2-phosphoglycerate contacts are provided by Lys337, Arg366, Ser367, and Lys388. The active-site Proton acceptor is the Lys337.

The protein belongs to the enolase family. The cofactor is Mg(2+).

Its subcellular location is the cytoplasm. The protein resides in the secreted. The protein localises to the cell surface. It catalyses the reaction (2R)-2-phosphoglycerate = phosphoenolpyruvate + H2O. Its pathway is carbohydrate degradation; glycolysis; pyruvate from D-glyceraldehyde 3-phosphate: step 4/5. Functionally, catalyzes the reversible conversion of 2-phosphoglycerate (2-PG) into phosphoenolpyruvate (PEP). It is essential for the degradation of carbohydrates via glycolysis. This is Enolase from Methanococcus aeolicus (strain ATCC BAA-1280 / DSM 17508 / OCM 812 / Nankai-3).